Reading from the N-terminus, the 137-residue chain is Large ribosomal subunit protein uL16 (137 aa).

The protein belongs to the universal ribosomal protein uL16 family. Part of the 50S ribosomal subunit.

Functionally, binds 23S rRNA and is also seen to make contacts with the A and possibly P site tRNAs. This chain is Large ribosomal subunit protein uL16, found in Ruegeria sp. (strain TM1040) (Silicibacter sp.).